The primary structure comprises 260 residues: NAD kinase (260 aa).

The active-site Proton acceptor is aspartate 49. NAD(+) contacts are provided by residues 49 to 50, 119 to 120, aspartate 149, alanine 157, and 160 to 165; these read DG, NE, and TAYNLS.

Belongs to the NAD kinase family. It depends on a divalent metal cation as a cofactor.

The protein resides in the cytoplasm. It carries out the reaction NAD(+) + ATP = ADP + NADP(+) + H(+). Its function is as follows. Involved in the regulation of the intracellular balance of NAD and NADP, and is a key enzyme in the biosynthesis of NADP. Catalyzes specifically the phosphorylation on 2'-hydroxyl of the adenosine moiety of NAD to yield NADP. In Caulobacter vibrioides (strain ATCC 19089 / CIP 103742 / CB 15) (Caulobacter crescentus), this protein is NAD kinase.